The primary structure comprises 217 residues: Probable transaldolase (217 aa).

K84 functions as the Schiff-base intermediate with substrate in the catalytic mechanism.

The protein belongs to the transaldolase family. Type 3B subfamily.

The protein resides in the cytoplasm. It carries out the reaction D-sedoheptulose 7-phosphate + D-glyceraldehyde 3-phosphate = D-erythrose 4-phosphate + beta-D-fructose 6-phosphate. It functions in the pathway carbohydrate degradation; pentose phosphate pathway; D-glyceraldehyde 3-phosphate and beta-D-fructose 6-phosphate from D-ribose 5-phosphate and D-xylulose 5-phosphate (non-oxidative stage): step 2/3. Its function is as follows. Transaldolase is important for the balance of metabolites in the pentose-phosphate pathway. The protein is Probable transaldolase of Roseiflexus sp. (strain RS-1).